Here is an 813-residue protein sequence, read N- to C-terminus: Immunoglobulin superfamily DCC subclass member 3 (813 aa).

Positions 1 to 21 (MAEPRTASPRRLPALRRPGFL) are disordered. The signal sequence occupies residues 1–47 (MAEPRTASPRRLPALRRPGFLPPLLPPPPPPLLLLLLLLPLPAPSLG). Residues 9 to 19 (PRRLPALRRPG) are compositionally biased toward low complexity. 4 consecutive Ig-like C2-type domains span residues 49-151 (GHSA…ATMS), 151-232 (SDFH…VRVS), 250-333 (PTIL…RTAQ), and 341-428 (PAEF…ARLT). 2 cysteine pairs are disulfide-bonded: C75/C129 and C172/C221. An N-linked (GlcNAc...) asparagine glycan is attached at N105. N-linked (GlcNAc...) asparagine glycosylation is present at N258. Cystine bridges form between C271/C319 and C363/C412. N-linked (GlcNAc...) asparagine glycosylation is found at N393 and N394. Fibronectin type-III domains follow at residues 438–532 (PPRN…TLGE) and 535–630 (VPPP…ASER). N592, N616, and N646 each carry an N-linked (GlcNAc...) asparagine glycan. Residues 653–673 (IVIGIHIGVTCIIFCVLFLLF) form a helical membrane-spanning segment. Disordered regions lie at residues 689–724 (LSPPQGPRSQRDPGILALNGLSRGEGGQLSRDEKPV) and 775–813 (TTEATSPCAGPGPVPAPQDIGPVPLSEGQTQPPAVAAPQ).

The protein belongs to the immunoglobulin superfamily. DCC family. As to expression, detected in cerebellum, kidney, heart, lung, skeletal muscle and spleen.

Its subcellular location is the membrane. The chain is Immunoglobulin superfamily DCC subclass member 3 (Igdcc3) from Mus musculus (Mouse).